Reading from the N-terminus, the 126-residue chain is Protein LLP homolog (126 aa).

Residues 1–21 (MAKSLRSKWRRKMRAEKRKKV) are compositionally biased toward basic residues. Disordered stretches follow at residues 1–22 (MAKS…KKVA) and 53–126 (VPPE…RLAW). Positions 73–94 (DGGKMDLDTKRNKKTMLDEHGR) are enriched in basic and acidic residues. Positions 103–126 (QAKKLKAKRVGKNGKPKPKKRLAW) are enriched in basic residues.

It belongs to the learning-associated protein family.

The protein resides in the nucleus. Its subcellular location is the nucleolus. It is found in the chromosome. Regulates dendritic and spine growth and synaptic transmission. The sequence is that of Protein LLP homolog (llph) from Danio rerio (Zebrafish).